Consider the following 170-residue polypeptide: uncharacterized protein (170 aa).

The Ferritin-like diiron domain occupies 1–148 (MVKSQKVIDV…TIHDFFENAT (148 aa)).

This is an uncharacterized protein from Ureaplasma parvum serovar 3 (strain ATCC 700970).